We begin with the raw amino-acid sequence, 146 residues long: Fluoride-specific ion channel FluC (146 aa).

4 consecutive transmembrane segments (helical) span residues 8-28, 47-67, 91-111, and 121-141; these read FAIALGGSIGAVLRYLITLTV, LANLLGCCALGGLFQFSQALV, IGVLGSLTTFSTLIGETAVFA, and MLLGINVIAGWCLFWAAAAVV. 2 residues coordinate Na(+): glycine 95 and threonine 98.

The protein belongs to the fluoride channel Fluc/FEX (TC 1.A.43) family.

The protein resides in the cell inner membrane. The catalysed reaction is fluoride(in) = fluoride(out). Na(+) is not transported, but it plays an essential structural role and its presence is essential for fluoride channel function. In terms of biological role, fluoride-specific ion channel. Important for reducing fluoride concentration in the cell, thus reducing its toxicity. The sequence is that of Fluoride-specific ion channel FluC from Rhodopirellula baltica (strain DSM 10527 / NCIMB 13988 / SH1).